Here is a 259-residue protein sequence, read N- to C-terminus: 5'-nucleotidase SurE (259 aa).

A divalent metal cation is bound by residues D13, D14, S44, and N100.

The protein belongs to the SurE nucleotidase family. It depends on a divalent metal cation as a cofactor.

The protein resides in the cytoplasm. The catalysed reaction is a ribonucleoside 5'-phosphate + H2O = a ribonucleoside + phosphate. In terms of biological role, nucleotidase that shows phosphatase activity on nucleoside 5'-monophosphates. The polypeptide is 5'-nucleotidase SurE (Bacteroides thetaiotaomicron (strain ATCC 29148 / DSM 2079 / JCM 5827 / CCUG 10774 / NCTC 10582 / VPI-5482 / E50)).